Consider the following 199-residue polypeptide: Ribonuclease HII (199 aa).

In terms of domain architecture, RNase H type-2 spans 10 to 199; sequence HLVAGVDEVG…VKRALGLASN (190 aa). 3 residues coordinate a divalent metal cation: Asp16, Glu17, and Asp108.

Belongs to the RNase HII family. Mn(2+) is required as a cofactor. Requires Mg(2+) as cofactor.

It localises to the cytoplasm. The enzyme catalyses Endonucleolytic cleavage to 5'-phosphomonoester.. Functionally, endonuclease that specifically degrades the RNA of RNA-DNA hybrids. This Klebsiella pneumoniae (strain 342) protein is Ribonuclease HII.